Consider the following 383-residue polypeptide: Na(+)/H(+) antiporter NhaA (383 aa).

Helical transmembrane passes span 10 to 30, 56 to 76, 91 to 111, 121 to 141, 150 to 170, 174 to 194, 206 to 226, 254 to 274, 289 to 308, 327 to 347, and 355 to 375; these read LIGG…NNSP, LMHW…GLEI, IITP…IYLS, GWAI…ALLG, LLVI…IAIF, SLSL…IICN, VVLG…ATLA, PWII…ISFS, IIWG…LAVF, GISL…VLAF, and AIKI…YIVL.

It belongs to the NhaA Na(+)/H(+) (TC 2.A.33) antiporter family.

Its subcellular location is the cell inner membrane. It carries out the reaction Na(+)(in) + 2 H(+)(out) = Na(+)(out) + 2 H(+)(in). Its function is as follows. Na(+)/H(+) antiporter that extrudes sodium in exchange for external protons. This is Na(+)/H(+) antiporter NhaA from Francisella tularensis subsp. tularensis (strain WY96-3418).